Consider the following 78-residue polypeptide: Conotoxin 1 (78 aa).

The N-terminal stretch at 1–22 (MKLTCMMFVAVLFLTASVFITA) is a signal peptide. Residues 23 to 51 (DDSRNGIENLPRMRRHEMKNPKASKLNKR) constitute a propeptide that is removed on maturation. Glutamine 52 is subject to Pyrrolidone carboxylic acid. Intrachain disulfides connect cysteine 53-cysteine 69, cysteine 60-cysteine 73, and cysteine 68-cysteine 77.

It belongs to the conotoxin O1 superfamily. As to expression, expressed by the venom duct.

Its subcellular location is the secreted. This chain is Conotoxin 1, found in Conus imperialis (Imperial cone).